A 283-amino-acid chain; its full sequence is ATP phosphoribosyltransferase (283 aa).

This sequence belongs to the ATP phosphoribosyltransferase family. Long subfamily. It depends on Mg(2+) as a cofactor.

It is found in the cytoplasm. The catalysed reaction is 1-(5-phospho-beta-D-ribosyl)-ATP + diphosphate = 5-phospho-alpha-D-ribose 1-diphosphate + ATP. It functions in the pathway amino-acid biosynthesis; L-histidine biosynthesis; L-histidine from 5-phospho-alpha-D-ribose 1-diphosphate: step 1/9. With respect to regulation, feedback inhibited by histidine. Catalyzes the condensation of ATP and 5-phosphoribose 1-diphosphate to form N'-(5'-phosphoribosyl)-ATP (PR-ATP). Has a crucial role in the pathway because the rate of histidine biosynthesis seems to be controlled primarily by regulation of HisG enzymatic activity. The protein is ATP phosphoribosyltransferase of Bifidobacterium longum (strain DJO10A).